Reading from the N-terminus, the 211-residue chain is Protein-L-isoaspartate O-methyltransferase (211 aa).

The active site involves Ser62.

It belongs to the methyltransferase superfamily. L-isoaspartyl/D-aspartyl protein methyltransferase family.

It localises to the cytoplasm. It carries out the reaction [protein]-L-isoaspartate + S-adenosyl-L-methionine = [protein]-L-isoaspartate alpha-methyl ester + S-adenosyl-L-homocysteine. Its function is as follows. Catalyzes the methyl esterification of L-isoaspartyl residues in peptides and proteins that result from spontaneous decomposition of normal L-aspartyl and L-asparaginyl residues. It plays a role in the repair and/or degradation of damaged proteins. This chain is Protein-L-isoaspartate O-methyltransferase, found in Shewanella oneidensis (strain ATCC 700550 / JCM 31522 / CIP 106686 / LMG 19005 / NCIMB 14063 / MR-1).